A 332-amino-acid polypeptide reads, in one-letter code: CAX-interacting protein 4 (332 aa).

Residues 33–59 (GYDPYAPTSKEEPKTTQQKTEDPENSY) form a disordered region. Over residues 41 to 54 (SKEEPKTTQQKTED) the composition is skewed to basic and acidic residues. The CCHC-type zinc-finger motif lies at 81 to 98 (GSCKKCGRVGHLTFQCRN). A compositionally biased stretch (basic and acidic residues) spans 124-133 (IRRGVGKGEV). A disordered region spans residues 124 to 332 (IRRGVGKGEV…RKRHHRKERE (209 aa)). Acidic residues predominate over residues 134–153 (EEVSSEEEEESESSDSDVDS). Residues 154-163 (EMERIIAERF) are compositionally biased toward basic and acidic residues. Basic residues-rich tracts occupy residues 198-214 (RKRRRRSMKKRSSHKRR) and 227-236 (SKRRKERRGR). Positions 241-250 (DDSDESEDED) are enriched in acidic residues. 2 stretches are compositionally biased toward basic residues: residues 254–269 (VKRKSRKEKRRRRSRR) and 314–332 (SSKRSEKKSRKRHHRKERE).

As to quaternary structure, interacts with CAX1. As to expression, expressed in leaves, stems and roots, and at lower levels in flowers.

It localises to the nucleus. In terms of biological role, may regulate CAX1 cation transporter. The chain is CAX-interacting protein 4 (CXIP4) from Arabidopsis thaliana (Mouse-ear cress).